Consider the following 592-residue polypeptide: Aspartate--tRNA(Asp/Asn) ligase (592 aa).

Glu-173 is an L-aspartate binding site. The interval 197–200 is aspartate; it reads QLFK. Residue Arg-219 participates in L-aspartate binding. ATP-binding positions include 219–221 and Gln-228; that span reads RDE. An L-aspartate-binding site is contributed by His-451. Glu-486 lines the ATP pocket. L-aspartate is bound at residue Arg-493. Residue 538-541 coordinates ATP; sequence GLDR.

It belongs to the class-II aminoacyl-tRNA synthetase family. Type 1 subfamily. Homodimer.

Its subcellular location is the cytoplasm. It carries out the reaction tRNA(Asx) + L-aspartate + ATP = L-aspartyl-tRNA(Asx) + AMP + diphosphate. In terms of biological role, aspartyl-tRNA synthetase with relaxed tRNA specificity since it is able to aspartylate not only its cognate tRNA(Asp) but also tRNA(Asn). Reaction proceeds in two steps: L-aspartate is first activated by ATP to form Asp-AMP and then transferred to the acceptor end of tRNA(Asp/Asn). This Alkalilimnicola ehrlichii (strain ATCC BAA-1101 / DSM 17681 / MLHE-1) protein is Aspartate--tRNA(Asp/Asn) ligase.